Consider the following 287-residue polypeptide: 3-methyl-2-oxobutanoate hydroxymethyltransferase (287 aa).

Positions 1-19 are enriched in polar residues; sequence MSTLPKTLTLDTSTSRANP. Residues 1–24 are disordered; sequence MSTLPKTLTLDTSTSRANPTPQPM. The Mg(2+) site is built by Asp66 and Asp105. 3-methyl-2-oxobutanoate-binding positions include 66 to 67, Asp105, and Lys135; that span reads DS. Glu137 serves as a coordination point for Mg(2+). Glu204 serves as the catalytic Proton acceptor.

This sequence belongs to the PanB family. As to quaternary structure, homodecamer; pentamer of dimers. Requires Mg(2+) as cofactor.

The protein localises to the cytoplasm. It carries out the reaction 3-methyl-2-oxobutanoate + (6R)-5,10-methylene-5,6,7,8-tetrahydrofolate + H2O = 2-dehydropantoate + (6S)-5,6,7,8-tetrahydrofolate. It functions in the pathway cofactor biosynthesis; (R)-pantothenate biosynthesis; (R)-pantoate from 3-methyl-2-oxobutanoate: step 1/2. Its function is as follows. Catalyzes the reversible reaction in which hydroxymethyl group from 5,10-methylenetetrahydrofolate is transferred onto alpha-ketoisovalerate to form ketopantoate. This Sphingopyxis alaskensis (strain DSM 13593 / LMG 18877 / RB2256) (Sphingomonas alaskensis) protein is 3-methyl-2-oxobutanoate hydroxymethyltransferase.